A 488-amino-acid chain; its full sequence is UDP-glycosyltransferase 73B1 (488 aa).

UDP-alpha-D-glucose is bound by residues threonine 297, 356–358, 373–381, and 395–398; these read APQ, HCGWNSLLE, and GAEQ.

It belongs to the UDP-glycosyltransferase family.

Its function is as follows. Possesses low quercetin 3-O-glucosyltransferase and 7-O-glucosyltransferase activities in vitro. The protein is UDP-glycosyltransferase 73B1 (UGT73B1) of Arabidopsis thaliana (Mouse-ear cress).